A 261-amino-acid chain; its full sequence is Ribonuclease HII (261 aa).

Residues 71–259 (QYIAGVDEVG…VKEAKLHFES (189 aa)) enclose the RNase H type-2 domain. Aspartate 77, glutamate 78, and aspartate 169 together coordinate a divalent metal cation.

The protein belongs to the RNase HII family. Mn(2+) is required as a cofactor. Requires Mg(2+) as cofactor.

The protein localises to the cytoplasm. It carries out the reaction Endonucleolytic cleavage to 5'-phosphomonoester.. Endonuclease that specifically degrades the RNA of RNA-DNA hybrids. The sequence is that of Ribonuclease HII from Listeria innocua serovar 6a (strain ATCC BAA-680 / CLIP 11262).